The primary structure comprises 237 residues: Large ribosomal subunit protein uL1 (237 aa).

Belongs to the universal ribosomal protein uL1 family. Part of the 50S ribosomal subunit.

In terms of biological role, binds directly to 23S rRNA. The L1 stalk is quite mobile in the ribosome, and is involved in E site tRNA release. Functionally, protein L1 is also a translational repressor protein, it controls the translation of the L11 operon by binding to its mRNA. The sequence is that of Large ribosomal subunit protein uL1 from Chloroflexus aggregans (strain MD-66 / DSM 9485).